The primary structure comprises 694 residues: Elongation factor G (694 aa).

The tr-type G domain occupies 10–285 (EKTRNIGIMA…GVVDYLPSPL (276 aa)). GTP-binding positions include 19–26 (AHIDAGKT), 83–87 (DTPGH), and 137–140 (NKMD).

It belongs to the TRAFAC class translation factor GTPase superfamily. Classic translation factor GTPase family. EF-G/EF-2 subfamily.

It is found in the cytoplasm. Catalyzes the GTP-dependent ribosomal translocation step during translation elongation. During this step, the ribosome changes from the pre-translocational (PRE) to the post-translocational (POST) state as the newly formed A-site-bound peptidyl-tRNA and P-site-bound deacylated tRNA move to the P and E sites, respectively. Catalyzes the coordinated movement of the two tRNA molecules, the mRNA and conformational changes in the ribosome. This Lactobacillus delbrueckii subsp. bulgaricus (strain ATCC BAA-365 / Lb-18) protein is Elongation factor G.